The primary structure comprises 580 residues: Laccase-20 (580 aa).

Residues 1-23 form the signal peptide; sequence MVASLLCTVAVAVLAVAAVGGEA. Plastocyanin-like domains are found at residues 31 to 147 and 156 to 310; these read VVHE…PRDG and KDVP…YTGV. N-linked (GlcNAc...) asparagine glycosylation is found at asparagine 36 and asparagine 42. Residues histidine 81 and histidine 83 each coordinate Cu cation. Residue asparagine 115 is glycosylated (N-linked (GlcNAc...) asparagine). Residues histidine 126 and histidine 128 each contribute to the Cu cation site. Asparagine 200, asparagine 339, asparagine 373, asparagine 392, asparagine 399, asparagine 429, and asparagine 460 each carry an N-linked (GlcNAc...) asparagine glycan. A Plastocyanin-like 3 domain is found at 419–561; sequence DFPVRPPRPY…ATAFIVEDGP (143 aa). Residues asparagine 478, histidine 481, histidine 483, histidine 540, cysteine 541, histidine 542, histidine 546, and methionine 551 each coordinate Cu cation. The tract at residues 560–580 is disordered; sequence GPTPETSLPPPPPEFKRCDAS.

Belongs to the multicopper oxidase family. Cu cation is required as a cofactor.

The protein localises to the secreted. It localises to the extracellular space. The protein resides in the apoplast. The enzyme catalyses 4 hydroquinone + O2 = 4 benzosemiquinone + 2 H2O. Functionally, lignin degradation and detoxification of lignin-derived products. This Oryza sativa subsp. japonica (Rice) protein is Laccase-20 (LAC20).